A 1282-amino-acid polypeptide reads, in one-letter code: Trafficking protein particle complex subunit 8 (1282 aa).

The interval 245–287 is disordered; it reads TDAIAPGPNGASNQQSPSSPTSSVATISSTMPAVGSVSPNSHP. A compositionally biased stretch (low complexity) spans 255 to 273; sequence ASNQQSPSSPTSSVATISS.

Plays a role in endoplasmic reticulum to Golgi apparatus trafficking at a very early stage. Involved in collagen secretion. The chain is Trafficking protein particle complex subunit 8 from Caenorhabditis elegans.